Consider the following 31-residue polypeptide: Conotoxin pc6d (31 aa).

3 disulfide bridges follow: C2–C20, C9–C25, and C19–C29.

It belongs to the conotoxin O1 superfamily. Expressed by the venom duct.

The protein localises to the secreted. The sequence is that of Conotoxin pc6d from Conus pictus (Cone snail).